A 140-amino-acid polypeptide reads, in one-letter code: Large ribosomal subunit protein uL11 (140 aa).

Belongs to the universal ribosomal protein uL11 family. Part of the ribosomal stalk of the 50S ribosomal subunit. Interacts with L10 and the large rRNA to form the base of the stalk. L10 forms an elongated spine to which L12 dimers bind in a sequential fashion forming a multimeric L10(L12)X complex. In terms of processing, one or more lysine residues are methylated.

Functionally, forms part of the ribosomal stalk which helps the ribosome interact with GTP-bound translation factors. The polypeptide is Large ribosomal subunit protein uL11 (Dehalococcoides mccartyi (strain ATCC BAA-2100 / JCM 16839 / KCTC 5957 / BAV1)).